A 90-amino-acid polypeptide reads, in one-letter code: DNA-directed RNA polymerase subunit omega (90 aa).

This sequence belongs to the RNA polymerase subunit omega family. As to quaternary structure, the RNAP catalytic core consists of 2 alpha, 1 beta, 1 beta' and 1 omega subunit. When a sigma factor is associated with the core the holoenzyme is formed, which can initiate transcription.

The catalysed reaction is RNA(n) + a ribonucleoside 5'-triphosphate = RNA(n+1) + diphosphate. Promotes RNA polymerase assembly. Latches the N- and C-terminal regions of the beta' subunit thereby facilitating its interaction with the beta and alpha subunits. The protein is DNA-directed RNA polymerase subunit omega of Beutenbergia cavernae (strain ATCC BAA-8 / DSM 12333 / CCUG 43141 / JCM 11478 / NBRC 16432 / NCIMB 13614 / HKI 0122).